A 177-amino-acid chain; its full sequence is Biotin-dependent acetyl-/propionyl-coenzyme A carboxylase epsilon subunit (177 aa).

The interval 1 to 112 (MGTCPCESSE…TEKPLHPHEP (112 aa)) is disordered. Residues 18-100 (VSGTNEVSDG…SDGNETNNPA (83 aa)) are compositionally biased toward polar residues.

In terms of assembly, interacts with the AccA3/AccD5 biotin-dependent acyl-CoA carboxylase complex. Interacts with the AccA3/AccD6 complex. Is also part of the long-chain acyl-CoA carboxylase (LCC) complex, which is composed of AccA3, AccD4, AccD5 and AccE5. The four subunits are essential for activity, but AccD5, together with AccE5, probably plays a structural role rather than a catalytic one.

Its function is as follows. Stimulates activity of the AccA3/AccD5 biotin-dependent acyl-CoA carboxylase complex. Interacts with AccD5 and modulates its carboxylase activity for acetyl-CoA and propionyl-CoA. Inhibits activity of the AccA3/AccD6 complex. Is also required for the activity of the long-chain acyl-CoA carboxylase (LCC) complex. The sequence is that of Biotin-dependent acetyl-/propionyl-coenzyme A carboxylase epsilon subunit from Mycobacterium tuberculosis (strain ATCC 25618 / H37Rv).